We begin with the raw amino-acid sequence, 383 residues long: Succinyl-diaminopimelate desuccinylase (383 aa).

H73 contributes to the Zn(2+) binding site. The active site involves D75. D107 provides a ligand contact to Zn(2+). E141 functions as the Proton acceptor in the catalytic mechanism. Zn(2+)-binding residues include E142, E170, and H356.

It belongs to the peptidase M20A family. DapE subfamily. Homodimer. It depends on Zn(2+) as a cofactor. Co(2+) serves as cofactor.

It catalyses the reaction N-succinyl-(2S,6S)-2,6-diaminopimelate + H2O = (2S,6S)-2,6-diaminopimelate + succinate. Its pathway is amino-acid biosynthesis; L-lysine biosynthesis via DAP pathway; LL-2,6-diaminopimelate from (S)-tetrahydrodipicolinate (succinylase route): step 3/3. Functionally, catalyzes the hydrolysis of N-succinyl-L,L-diaminopimelic acid (SDAP), forming succinate and LL-2,6-diaminopimelate (DAP), an intermediate involved in the bacterial biosynthesis of lysine and meso-diaminopimelic acid, an essential component of bacterial cell walls. The chain is Succinyl-diaminopimelate desuccinylase from Pseudomonas putida (strain W619).